The primary structure comprises 305 residues: Methionyl-tRNA formyltransferase (305 aa).

111-114 is a (6S)-5,6,7,8-tetrahydrofolate binding site; sequence SILP.

This sequence belongs to the Fmt family.

It carries out the reaction L-methionyl-tRNA(fMet) + (6R)-10-formyltetrahydrofolate = N-formyl-L-methionyl-tRNA(fMet) + (6S)-5,6,7,8-tetrahydrofolate + H(+). In terms of biological role, attaches a formyl group to the free amino group of methionyl-tRNA(fMet). The formyl group appears to play a dual role in the initiator identity of N-formylmethionyl-tRNA by promoting its recognition by IF2 and preventing the misappropriation of this tRNA by the elongation apparatus. This is Methionyl-tRNA formyltransferase from Wolinella succinogenes (strain ATCC 29543 / DSM 1740 / CCUG 13145 / JCM 31913 / LMG 7466 / NCTC 11488 / FDC 602W) (Vibrio succinogenes).